We begin with the raw amino-acid sequence, 416 residues long: 4-hydroxy-3-methylbut-2-en-1-yl diphosphate synthase (flavodoxin) (416 aa).

[4Fe-4S] cluster is bound by residues cysteine 304, cysteine 307, cysteine 350, and glutamate 357.

The protein belongs to the IspG family. It depends on [4Fe-4S] cluster as a cofactor.

The enzyme catalyses (2E)-4-hydroxy-3-methylbut-2-enyl diphosphate + oxidized [flavodoxin] + H2O + 2 H(+) = 2-C-methyl-D-erythritol 2,4-cyclic diphosphate + reduced [flavodoxin]. It participates in isoprenoid biosynthesis; isopentenyl diphosphate biosynthesis via DXP pathway; isopentenyl diphosphate from 1-deoxy-D-xylulose 5-phosphate: step 5/6. Converts 2C-methyl-D-erythritol 2,4-cyclodiphosphate (ME-2,4cPP) into 1-hydroxy-2-methyl-2-(E)-butenyl 4-diphosphate. The protein is 4-hydroxy-3-methylbut-2-en-1-yl diphosphate synthase (flavodoxin) of Rhizobium etli (strain ATCC 51251 / DSM 11541 / JCM 21823 / NBRC 15573 / CFN 42).